Consider the following 201-residue polypeptide: Recombination protein RecR (201 aa).

A C4-type zinc finger spans residues 57–72 (CKYCRTFTEQEQCTIC). In terms of domain architecture, Toprim spans 81–176 (GQICVVESPA…TASRIAHGVP (96 aa)).

This sequence belongs to the RecR family.

May play a role in DNA repair. It seems to be involved in an RecBC-independent recombinational process of DNA repair. It may act with RecF and RecO. The sequence is that of Recombination protein RecR from Photorhabdus laumondii subsp. laumondii (strain DSM 15139 / CIP 105565 / TT01) (Photorhabdus luminescens subsp. laumondii).